The chain runs to 518 residues: MADKLNEYVALIKTEIKKYSKKIFNSEIGQVISVADGIAKVSGLENALLNELIQFENNIQGIVLNLEQNTVGIALFGDYSSLREGSTAKRTHSVMKTPVGDVMLGRIVNALGEAIDGRGDIKATEYDQIEKIAPGVMKRKSVNQPLETGILTIDALFPIGKGQRELIVGDRQTGKTAIAIDTIINQKDKDVYCVYVAIGQKNSSVAQIVHQLEVNDSMKYTTVVCATASDSDSMVYLSPFTGITIAEYWLKKGKDVLIVFDDLSKHAVAYRTLSLLLKRPPGREAFPGDVFYLHSRLLERACKLNDENGGGSITALPIIETQAGDISAYIPTNVISITDGQLFMVSSLFNAGQRPAIQIGLSVSRVGSAAQTKAIKQQTGSLKLELAQYSELDSFSQFGSDLDENTKKVLEHGKRVMEMIKQPNGKPYSQVHEALFLFAINKAFIKFIPVDEIAKFKQRITEEFNGSHPLFKELSNKKEFTEDLESKTKTAFKMLVKRFISTLTDYDITKFGSIEELN.

169-176 contributes to the ATP binding site; sequence GDRQTGKT.

This sequence belongs to the ATPase alpha/beta chains family. As to quaternary structure, F-type ATPases have 2 components, CF(1) - the catalytic core - and CF(0) - the membrane proton channel. CF(1) has five subunits: alpha(3), beta(3), gamma(1), delta(1), epsilon(1). CF(0) has three main subunits: a(1), b(2) and c(9-12). The alpha and beta chains form an alternating ring which encloses part of the gamma chain. CF(1) is attached to CF(0) by a central stalk formed by the gamma and epsilon chains, while a peripheral stalk is formed by the delta and b chains.

The protein resides in the cell membrane. The catalysed reaction is ATP + H2O + 4 H(+)(in) = ADP + phosphate + 5 H(+)(out). Produces ATP from ADP in the presence of a proton gradient across the membrane. The alpha chain is a regulatory subunit. The chain is ATP synthase subunit alpha from Mycoplasma genitalium (strain ATCC 33530 / DSM 19775 / NCTC 10195 / G37) (Mycoplasmoides genitalium).